The following is a 208-amino-acid chain: Uridine kinase (208 aa).

Position 11 to 18 (11 to 18 (GGTGSGKS)) interacts with ATP.

Belongs to the uridine kinase family.

The protein resides in the cytoplasm. The enzyme catalyses uridine + ATP = UMP + ADP + H(+). It catalyses the reaction cytidine + ATP = CMP + ADP + H(+). It functions in the pathway pyrimidine metabolism; CTP biosynthesis via salvage pathway; CTP from cytidine: step 1/3. Its pathway is pyrimidine metabolism; UMP biosynthesis via salvage pathway; UMP from uridine: step 1/1. The protein is Uridine kinase of Clostridium novyi (strain NT).